The sequence spans 325 residues: Elongation factor P--(R)-beta-lysine ligase (325 aa).

76–78 is a substrate binding site; it reads SPE. ATP contacts are provided by residues 100-102 and N109; that span reads RNE. Residue Y118 coordinates substrate. 244-245 is a binding site for ATP; sequence EL. E251 contacts substrate. Position 300 (G300) interacts with ATP.

This sequence belongs to the class-II aminoacyl-tRNA synthetase family. EpmA subfamily. In terms of assembly, homodimer.

The enzyme catalyses D-beta-lysine + L-lysyl-[protein] + ATP = N(6)-((3R)-3,6-diaminohexanoyl)-L-lysyl-[protein] + AMP + diphosphate + H(+). In terms of biological role, with EpmB is involved in the beta-lysylation step of the post-translational modification of translation elongation factor P (EF-P). Catalyzes the ATP-dependent activation of (R)-beta-lysine produced by EpmB, forming a lysyl-adenylate, from which the beta-lysyl moiety is then transferred to the epsilon-amino group of a conserved specific lysine residue in EF-P. The polypeptide is Elongation factor P--(R)-beta-lysine ligase (Pectobacterium carotovorum subsp. carotovorum (strain PC1)).